Here is a 102-residue protein sequence, read N- to C-terminus: Cytochrome b (102 aa).

3 consecutive transmembrane segments (helical) span residues 1 to 21 (FGSL…FLAM), 45 to 66 (WLIR…YLHI), and 81 to 101 (WNIG…GYVL). Heme b contacts are provided by His51 and His65.

The protein belongs to the cytochrome b family. The cytochrome bc1 complex contains 3 respiratory subunits (MT-CYB, CYC1 and UQCRFS1), 2 core proteins (UQCRC1 and UQCRC2) and probably 6 low-molecular weight proteins. Requires heme b as cofactor.

It is found in the mitochondrion inner membrane. In terms of biological role, component of the ubiquinol-cytochrome c reductase complex (complex III or cytochrome b-c1 complex) that is part of the mitochondrial respiratory chain. The b-c1 complex mediates electron transfer from ubiquinol to cytochrome c. Contributes to the generation of a proton gradient across the mitochondrial membrane that is then used for ATP synthesis. The protein is Cytochrome b (mt-cyb) of Megalops atlanticus (Tarpon).